Reading from the N-terminus, the 123-residue chain is Protein Wnt-3b (123 aa).

A lipid anchor (O-palmitoleoyl serine; by PORCN) is attached at Ser-1. Cys-89 and Cys-104 are joined by a disulfide. An N-linked (GlcNAc...) asparagine glycan is attached at Asn-90.

The protein belongs to the Wnt family. Palmitoleoylation is required for efficient binding to frizzled receptors. Depalmitoleoylation leads to Wnt signaling pathway inhibition.

It localises to the secreted. Its subcellular location is the extracellular space. The protein localises to the extracellular matrix. Its function is as follows. Ligand for members of the frizzled family of seven transmembrane receptors. Probable developmental protein. May be a signaling molecule which affects the development of discrete regions of tissues. Is likely to signal over only few cell diameters. The sequence is that of Protein Wnt-3b (WNT-3B) from Plethodon jordani (Red-cheeked salamander).